We begin with the raw amino-acid sequence, 61 residues long: UPF0434 protein PA14_25520 (61 aa).

This sequence belongs to the UPF0434 family.

The chain is UPF0434 protein PA14_25520 from Pseudomonas aeruginosa (strain UCBPP-PA14).